A 347-amino-acid chain; its full sequence is Involucrin (347 aa).

Disordered regions lie at residues 1–43 (MSQQ…LPAP) and 56–347 (PLED…RRSL). The span at 27–36 (ADTQQEQVKQ) shows a compositional bias: polar residues. Composition is skewed to low complexity over residues 70–114 (VPEQ…QQES) and 138–161 (DQQQQQESQVQELHVGHHQQQQES). 2 stretches are compositionally biased toward basic and acidic residues: residues 164–173 (QELHVDHHQQ) and 212–221 (QELHVDHHQQ). Low complexity-rich tracts occupy residues 222–241 (QQESQVQELHVDHQQQQQES) and 265–285 (DQQQQELQVQEVQQQQQQQQE). Positions 287 to 341 (QEDHQKAEHLEQEEAQREQQLKGQLEQEKKGVYQHLDQELTKRDEHLEKKGEHCW) are enriched in basic and acidic residues.

Belongs to the involucrin family. As to quaternary structure, directly or indirectly cross-linked to cornifelin (CNFN). In terms of processing, substrate of transglutaminase. Specific glutamines or lysines are cross-linked to keratins, desmoplakin and to inter involucrin molecules. Keratinocytes of epidermis and other stratified squamous epithelia.

The protein localises to the cytoplasm. Functionally, part of the insoluble cornified cell envelope (CE) of stratified squamous epithelia. The protein is Involucrin (IVL) of Sus scrofa (Pig).